A 325-amino-acid chain; its full sequence is GMP reductase (325 aa).

Cysteine 173 (thioimidate intermediate) is an active-site residue. 202 to 225 (IIADGGIRHHGDIAKSVRFGAAMV) is an NADP(+) binding site.

This sequence belongs to the IMPDH/GMPR family. GuaC type 2 subfamily.

It carries out the reaction IMP + NH4(+) + NADP(+) = GMP + NADPH + 2 H(+). Catalyzes the irreversible NADPH-dependent deamination of GMP to IMP. It functions in the conversion of nucleobase, nucleoside and nucleotide derivatives of G to A nucleotides, and in maintaining the intracellular balance of A and G nucleotides. The polypeptide is GMP reductase (Leptothrix cholodnii (strain ATCC 51168 / LMG 8142 / SP-6) (Leptothrix discophora (strain SP-6))).